The following is a 1037-amino-acid chain: Probable aminoglycoside efflux pump (1037 aa).

The Cytoplasmic segment spans residues 1–9; it reads MANFFIDRP. A helical transmembrane segment spans residues 10–28; that stretch reads IFAWVLAILLCLTGTLAIF. At 29 to 339 the chain is on the periplasmic side; that stretch reads SLPVEQYPDL…TSFVKASIED (311 aa). A helical transmembrane segment spans residues 340–359; sequence VVKTLLEAIALVFLVMYLFL. Residues 360 to 365 lie on the Cytoplasmic side of the membrane; that stretch reads QNFRAT. The helical transmembrane segment at 366–385 threads the bilayer; it reads LIPTIAVPVVLMGTFSVLYA. The Periplasmic segment spans residues 386-391; that stretch reads FGYSVN. A helical membrane pass occupies residues 392 to 413; that stretch reads TLTMFAMVLAIGLLVDDAIVVV. At 414-441 the chain is on the cytoplasmic side; that stretch reads ENVERIMSEEGLTPREATRKSMGQIQGA. A helical transmembrane segment spans residues 442–460; sequence LVGIAMVLSAVFVPMAFFG. Over 461–473 the chain is Periplasmic; sequence GTTGAIYRQFSIT. A helical transmembrane segment spans residues 474–496; that stretch reads IVAAMVLSVLVAMILTPALCATL. The Cytoplasmic portion of the chain corresponds to 497 to 537; sequence LKPLKKGEHHGQKGFFAWFNQMFNRNAERYEKGVAKILHRS. Residues 538–556 form a helical membrane-spanning segment; it reads LRWIVIYVLLLGGMVFLFL. The Periplasmic segment spans residues 557-870; that stretch reads RLPTSFLPLE…SYQERLSGAQ (314 aa). The helical transmembrane segment at 871–890 threads the bilayer; that stretch reads APALYAISLLVVFLCLAALY. At 891–896 the chain is on the cytoplasmic side; it reads ESWSVP. A helical membrane pass occupies residues 897 to 916; it reads FSVMLVVPLGVIGALLATWM. Residues 917–922 are Periplasmic-facing; the sequence is RGLEND. A helical transmembrane segment spans residues 923–944; sequence VYFQVGLLTVIGLSAKNAILIV. At 945 to 971 the chain is on the cytoplasmic side; it reads EFANEMNQKGHDLFEATLHACRQRLRP. The helical transmembrane segment at 972-990 threads the bilayer; sequence ILMTSLAFIFGVLPMATST. The Periplasmic portion of the chain corresponds to 991–1003; that stretch reads GAGSGGQHAVGTG. A helical membrane pass occupies residues 1004-1026; it reads VMGGMISATILAIYFVPLFFVLV. Residues 1027–1037 are Cytoplasmic-facing; it reads RRRFPLKPRPE.

Belongs to the resistance-nodulation-cell division (RND) (TC 2.A.6) family.

Its subcellular location is the cell inner membrane. Its function is as follows. Participates in the efflux of aminoglycosides. Confers resistance to a variety of these substances. The protein is Probable aminoglycoside efflux pump (acrD) of Escherichia coli (strain K12).